Here is a 305-residue protein sequence, read N- to C-terminus: Tyrosine recombinase XerC (305 aa).

In terms of domain architecture, Core-binding (CB) spans 2 to 88; the sequence is TNKQRLVHLF…ALRSFYKFLL (87 aa). A Tyr recombinase domain is found at 109–295; that stretch reads RIPSFLYEEE…SKDSLRKTYM (187 aa). Active-site residues include Arg-149, Lys-173, His-247, Arg-250, and His-273. The active-site O-(3'-phospho-DNA)-tyrosine intermediate is Tyr-282.

It belongs to the 'phage' integrase family. XerC subfamily. In terms of assembly, forms a cyclic heterotetrameric complex composed of two molecules of XerC and two molecules of XerD.

The protein resides in the cytoplasm. In terms of biological role, site-specific tyrosine recombinase, which acts by catalyzing the cutting and rejoining of the recombining DNA molecules. The XerC-XerD complex is essential to convert dimers of the bacterial chromosome into monomers to permit their segregation at cell division. It also contributes to the segregational stability of plasmids. The protein is Tyrosine recombinase XerC of Bacillus pumilus (strain SAFR-032).